The sequence spans 425 residues: Histidinol dehydrogenase (425 aa).

Substrate-binding residues include S231, Q253, and H256. The Zn(2+) site is built by Q253 and H256. Catalysis depends on proton acceptor residues E321 and H322. Substrate contacts are provided by H322, D355, E409, and H414. Zn(2+) is bound at residue D355. H414 contacts Zn(2+).

This sequence belongs to the histidinol dehydrogenase family. Requires Zn(2+) as cofactor.

It carries out the reaction L-histidinol + 2 NAD(+) + H2O = L-histidine + 2 NADH + 3 H(+). The protein operates within amino-acid biosynthesis; L-histidine biosynthesis; L-histidine from 5-phospho-alpha-D-ribose 1-diphosphate: step 9/9. Its function is as follows. Catalyzes the sequential NAD-dependent oxidations of L-histidinol to L-histidinaldehyde and then to L-histidine. The chain is Histidinol dehydrogenase from Carboxydothermus hydrogenoformans (strain ATCC BAA-161 / DSM 6008 / Z-2901).